The following is a 372-amino-acid chain: NAD(P)H-quinone oxidoreductase subunit 1 (372 aa).

Helical transmembrane passes span 27–47, 97–117, 128–148, 176–196, 204–224, 254–274, 308–328, and 347–367; these read VLWMPLPMLLMIIAATVGVLV, FLFTIGPALVVIPVFLSYLIV, VGAGVFLWIALSSIQPIGLLM, LALAVLAVVMMSNSLSTIDIV, ILGWNIWRQPVGFIIFWIAAL, FALFYVGSYVNLILSALLVSI, ALGITMTVLKAYLLVFTAILL, and FLLPISLVNLLVTAALKLTFP.

This sequence belongs to the complex I subunit 1 family. NDH-1 is composed of at least 11 different subunits.

The protein localises to the cellular thylakoid membrane. The enzyme catalyses a plastoquinone + NADH + (n+1) H(+)(in) = a plastoquinol + NAD(+) + n H(+)(out). It carries out the reaction a plastoquinone + NADPH + (n+1) H(+)(in) = a plastoquinol + NADP(+) + n H(+)(out). Its function is as follows. NDH-1 shuttles electrons from an unknown electron donor, via FMN and iron-sulfur (Fe-S) centers, to quinones in the respiratory and/or the photosynthetic chain. The immediate electron acceptor for the enzyme in this species is believed to be plastoquinone. Couples the redox reaction to proton translocation, and thus conserves the redox energy in a proton gradient. This Synechococcus elongatus (strain ATCC 33912 / PCC 7942 / FACHB-805) (Anacystis nidulans R2) protein is NAD(P)H-quinone oxidoreductase subunit 1.